The following is a 463-amino-acid chain: DDB1- and CUL4-associated factor 12-like protein 1 (463 aa).

The tract at residues 1 to 35 (MAQQQTGSRKRKAPAVEADAESSPSQGLAAADGEG) is disordered. WD repeat units lie at residues 87-137 (LTER…PLLR), 138-184 (DSEA…SLDP), 185-252 (LCLG…DVEA), 253-297 (IPRA…ALSR), 298-341 (LLSI…QQNI), and 342-376 (RPLCSREGGTGVRSLSFYRHIITVGTGQGSLLFYD).

The protein belongs to the WD repeat DCAF12 family.

The sequence is that of DDB1- and CUL4-associated factor 12-like protein 1 (DCAF12L1) from Homo sapiens (Human).